Consider the following 212-residue polypeptide: Thymidine kinase (212 aa).

Residues 11–18 (SPMNAGKT), 43–45 (DTR), and 86–89 (DEAQ) each bind ATP. The Proton acceptor role is filled by Glu-87. A substrate-binding site is contributed by Phe-119. Zn(2+) is bound by residues Cys-144, Cys-147, Cys-183, and Cys-186.

This sequence belongs to the thymidine kinase family.

It carries out the reaction thymidine + ATP = dTMP + ADP + H(+). The polypeptide is Thymidine kinase (TK) (Encephalitozoon cuniculi (strain GB-M1) (Microsporidian parasite)).